The chain runs to 326 residues: Target of rapamycin complex subunit LST8 (326 aa).

At Met-1 the chain carries N-acetylmethionine. WD repeat units lie at residues 1–37 (MNTT…CTRT), 40–80 (HQDS…PIIS), 83–122 (GVSK…LQCQ), 126–165 (QVNA…NEQL), and 168–207 (EPEF…GDEV). Thr-51 carries the post-translational modification Phosphothreonine. A Glycyl lysine isopeptide (Lys-Gly) (interchain with G-Cter in SUMO3) cross-link involves residue Lys-86. Glycyl lysine isopeptide (Lys-Gly) (interchain with G-Cter in SUMO3) cross-links involve residues Lys-215, Lys-245, and Lys-261. The WD 6 repeat unit spans residues 218–257 (AHTRYALQCRFSPDSTLLATCSADQTCKIWRTSNFSLMTE). A WD 7 repeat occupies 268–309 (SSRGWMWGCAFSGDSQYIVTASSDNLARLWCVETGEIKREYG). Lys-305 is covalently cross-linked (Glycyl lysine isopeptide (Lys-Gly) (interchain with G-Cter in SUMO3); alternate). Residues Lys-305 and Lys-313 each participate in a glycyl lysine isopeptide (Lys-Gly) (interchain with G-Cter in ubiquitin); alternate cross-link. Lys-313 participates in a covalent cross-link: Glycyl lysine isopeptide (Lys-Gly) (interchain with G-Cter in SUMO1); alternate.

The protein belongs to the WD repeat LST8 family. Part of the mechanistic target of rapamycin complex 1 (mTORC1) which contains MTOR, MLST8 and RPTOR. mTORC1 associates with AKT1S1/PRAS40, which inhibits its activity. mTORC1 binds to and is inhibited by FKBP12-rapamycin. Within mTORC1, interacts directly with MTOR and RPTOR. Component of the mechanistic target of rapamycin complex 2 (mTORC2), consisting in two heterotretramers composed of MTOR, MLST8, RICTOR and MAPKAP1/SIN1. Contrary to mTORC1, mTORC2 does not bind to and is not sensitive to FKBP12-rapamycin. mTORC1 and mTORC2 associate with DEPTOR, which regulates their activity. Interacts with RHEB. Interacts with MEAK7. Interacts with SIK3. Interacts with SLC38A7; this interaction promotes the recruitment of mTORC1 to the lysosome and its subsequent activation. In terms of processing, phosphorylation at Thr-51 by CDK1 promotes ubiquitination by the SCF(FBXW7) complex, followed by degradation. Ubiquitination by the SCF(FBXW7) and SCF(FBXW11) complexes following phosphorylation at Thr-51 by CDK1, leads to its degradation by the proteasome. Ubiquitination at Lys-305 and Lys-313 by TRAF2 via 'Lys-63'-linked polyubiquitin chains inhibits formation of the mTORC2 complex, while promoting formation of the mTORC1 complex: ubiquitination disrupts the interaction between MLST8 and MAPKAP1/SIN1 to favor mTORC1 assembly. Deubiquitination at Lys-305 and Lys-313 by OTUD7B promotes MLST8 interaction with MAPKAP1/SIN1, facilitating mTORC2 assembly. Post-translationally, sumoylation with SUMO1, SUMO2 and SUMO3 promotes assembly of both mTORC1 and mTORC2 complexes. Expressed at highest levels in the brain and testis, followed by lung, heart, kidney, skeletal muscle, spleen and liver. Also expressed in epididymal, abdominal and brown fat, small intestine and pancreas.

The protein localises to the lysosome membrane. It localises to the cytoplasm. In terms of biological role, subunit of both mTORC1 and mTORC2, which regulates cell growth and survival in response to nutrient and hormonal signals. mTORC1 is activated in response to growth factors or amino acids. In response to nutrients, mTORC1 is recruited to the lysosome membrane and promotes protein, lipid and nucleotide synthesis by phosphorylating several substrates, such as ribosomal protein S6 kinase (RPS6KB1 and RPS6KB2) and EIF4EBP1 (4E-BP1). In the same time, it inhibits catabolic pathways by phosphorylating the autophagy initiation components ULK1 and ATG13, as well as transcription factor TFEB, a master regulators of lysosomal biogenesis and autophagy. The mTORC1 complex is inhibited in response to starvation and amino acid depletion. Within mTORC1, MLST8 interacts directly with MTOR and enhances its kinase activity. In nutrient-poor conditions, stabilizes the MTOR-RPTOR interaction and favors RPTOR-mediated inhibition of MTOR activity. As part of the mTORC2 complex, transduces signals from growth factors to pathways involved in proliferation, cytoskeletal organization, lipogenesis and anabolic output. mTORC2 is also activated by growth factors, but seems to be nutrient-insensitive. In response to growth factors, mTORC2 phosphorylates and activates AGC protein kinase family members, including AKT (AKT1, AKT2 and AKT3), PKC (PRKCA, PRKCB and PRKCE) and SGK1. mTORC2 functions upstream of Rho GTPases to regulate the actin cytoskeleton, probably by activating one or more Rho-type guanine nucleotide exchange factors. mTORC2 promotes the serum-induced formation of stress-fibers or F-actin. mTORC2 plays a critical role in AKT1 activation by mediating phosphorylation of different sites depending on the context, such as 'Thr-450', 'Ser-473', 'Ser-477' or 'Thr-479', facilitating the phosphorylation of the activation loop of AKT1 on 'Thr-308' by PDPK1/PDK1 which is a prerequisite for full activation. mTORC2 regulates the phosphorylation of SGK1 at 'Ser-422'. mTORC2 also modulates the phosphorylation of PRKCA on 'Ser-657'. Within mTORC2, MLST8 acts as a bridge between MAPKAP1/SIN1 and MTOR. In Rattus norvegicus (Rat), this protein is Target of rapamycin complex subunit LST8.